Reading from the N-terminus, the 250-residue chain is 5'-nucleotidase SurE (250 aa).

Residues D9, D10, S40, and N92 each contribute to the a divalent metal cation site.

The protein belongs to the SurE nucleotidase family. It depends on a divalent metal cation as a cofactor.

It is found in the cytoplasm. It catalyses the reaction a ribonucleoside 5'-phosphate + H2O = a ribonucleoside + phosphate. Functionally, nucleotidase that shows phosphatase activity on nucleoside 5'-monophosphates. In Idiomarina loihiensis (strain ATCC BAA-735 / DSM 15497 / L2-TR), this protein is 5'-nucleotidase SurE.